Consider the following 351-residue polypeptide: uncharacterized protein (351 aa).

Mn(2+)-binding residues include Asp215, Asp226, His290, Glu319, and Glu333.

Belongs to the peptidase M24B family. Mn(2+) is required as a cofactor.

This is an uncharacterized protein from Staphylococcus aureus (strain MSSA476).